The chain runs to 377 residues: uncharacterized protein (377 aa).

2 helical membrane-spanning segments follow: residues 71–91 (IIAT…LVGS) and 140–160 (AEAA…PTLF).

The protein localises to the membrane. This is an uncharacterized protein from Coxiella burnetii (strain RSA 493 / Nine Mile phase I).